Here is a 362-residue protein sequence, read N- to C-terminus: Ribosomal RNA large subunit methyltransferase M (362 aa).

Residues Ser-194, 227 to 230 (CPGG), Asp-246, Asp-266, and Asp-284 contribute to the S-adenosyl-L-methionine site. Residue Lys-313 is the Proton acceptor of the active site.

Belongs to the class I-like SAM-binding methyltransferase superfamily. RNA methyltransferase RlmE family. RlmM subfamily. In terms of assembly, monomer.

It localises to the cytoplasm. It catalyses the reaction cytidine(2498) in 23S rRNA + S-adenosyl-L-methionine = 2'-O-methylcytidine(2498) in 23S rRNA + S-adenosyl-L-homocysteine + H(+). Catalyzes the 2'-O-methylation at nucleotide C2498 in 23S rRNA. This is Ribosomal RNA large subunit methyltransferase M from Aggregatibacter aphrophilus (strain NJ8700) (Haemophilus aphrophilus).